The primary structure comprises 120 residues: Large ribosomal subunit protein uL18 (120 aa).

It belongs to the universal ribosomal protein uL18 family. Part of the 50S ribosomal subunit; part of the 5S rRNA/L5/L18/L25 subcomplex. Contacts the 5S and 23S rRNAs.

Its function is as follows. This is one of the proteins that bind and probably mediate the attachment of the 5S RNA into the large ribosomal subunit, where it forms part of the central protuberance. The protein is Large ribosomal subunit protein uL18 of Gluconacetobacter diazotrophicus (strain ATCC 49037 / DSM 5601 / CCUG 37298 / CIP 103539 / LMG 7603 / PAl5).